The chain runs to 427 residues: 12-alpha,13-alpha-dihydroxyfumitremorgin C prenyltransferase (427 aa).

Glutamate 94 is a binding site for substrate. Arginine 105, lysine 192, tyrosine 194, tyrosine 268, glutamine 353, tyrosine 355, tyrosine 419, and tyrosine 423 together coordinate dimethylallyl diphosphate.

This sequence belongs to the tryptophan dimethylallyltransferase family.

The enzyme catalyses 12alpha,13alpha-dihydroxyfumitremorgin C + dimethylallyl diphosphate = fumitremorgin B + diphosphate. It participates in mycotoxin biosynthesis. In terms of biological role, 12-alpha,13-alpha-dihydroxyfumitremorgin C prenyltransferase; part of the gene cluster that mediates the biosynthesis of fumitremorgins, indole alkaloids that carry not only intriguing chemical structures, but also interesting biological and pharmacological activities. The biosynthesis of fumitremorgin-type alkaloids begins by condensation of the two amino acids L-tryptophan and L-proline to brevianamide F, catalyzed by the non-ribosomal peptide synthetase ftmA. Brevianamide F is then prenylated by the prenyltransferase ftmPT1/ftmB in the presence of dimethylallyl diphosphate, resulting in the formation of tryprostatin B. The three cytochrome P450 monooxygenases, ftmP450-1/ftmC, ftmP450-2/ftmE and ftmP450-3/FtmG, are responsible for the conversion of tryprostatin B to 6-hydroxytryprostatin B, tryprostatin A to fumitremorgin C and fumitremorgin C to 12,13-dihydroxyfumitremorgin C, respectively. The putative methyltransferase ftmMT/ftmD is expected for the conversion of 6-hydroxytryprostatin B to tryprostatin A. FtmPT2/FtmH catalyzes the prenylation of 12,13-dihydroxyfumitre-morgin C in the presence of dimethylallyl diphosphate, resulting in the formation of fumitremorgin B. Fumitremorgin B is further converted to verruculogen by ftmOx1/ftmF via the insertion of an endoperoxide bond between the two prenyl moieties. In some fungal species, verruculogen is further converted to fumitremorgin A, but the enzymes involved in this step have not been identified yet. The polypeptide is 12-alpha,13-alpha-dihydroxyfumitremorgin C prenyltransferase (Aspergillus fumigatus (Neosartorya fumigata)).